Consider the following 396-residue polypeptide: Putative carbamoyltransferase YgeW (396 aa).

Carbamoyl phosphate-binding positions include 71 to 74 (STRT), glutamine 98, 165 to 168 (HPTQ), and 330 to 331 (CL).

This sequence belongs to the aspartate/ornithine carbamoyltransferase superfamily. As to quaternary structure, homotrimer.

The chain is Putative carbamoyltransferase YgeW (ygeW) from Escherichia coli O157:H7.